The primary structure comprises 355 residues: NADH-quinone oxidoreductase subunit H (355 aa).

Helical transmembrane passes span 17 to 37, 86 to 106, 119 to 139, 165 to 185, 204 to 224, 262 to 282, 291 to 311, and 332 to 352; these read IIMVAESVLVLVVLLVAIAYI, GVFLLAPLVSCVLALAAWAVI, VGILFIFAISSLSIYGIIMAG, IGFVIITVLLCAGTLNLSAVV, ILNWYVWPLFPMFVVFYVSAL, YVAIVTMCAMATILFLGGWLP, WVPGIIWFLLKVFFMFFLFAM, and FLPLSLAMVIVVAGVLHFAGI.

Belongs to the complex I subunit 1 family. As to quaternary structure, NDH-1 is composed of 14 different subunits. Subunits NuoA, H, J, K, L, M, N constitute the membrane sector of the complex.

The protein localises to the cell inner membrane. It catalyses the reaction a quinone + NADH + 5 H(+)(in) = a quinol + NAD(+) + 4 H(+)(out). Functionally, NDH-1 shuttles electrons from NADH, via FMN and iron-sulfur (Fe-S) centers, to quinones in the respiratory chain. The immediate electron acceptor for the enzyme in this species is believed to be ubiquinone. Couples the redox reaction to proton translocation (for every two electrons transferred, four hydrogen ions are translocated across the cytoplasmic membrane), and thus conserves the redox energy in a proton gradient. This subunit may bind ubiquinone. The sequence is that of NADH-quinone oxidoreductase subunit H from Bradyrhizobium diazoefficiens (strain JCM 10833 / BCRC 13528 / IAM 13628 / NBRC 14792 / USDA 110).